Here is a 357-residue protein sequence, read N- to C-terminus: Peptide chain release factor 1 (357 aa).

An N5-methylglutamine modification is found at Gln-233. The disordered stretch occupies residues 284-305; the sequence is RSASISADRKSQVGTGDRSERI.

It belongs to the prokaryotic/mitochondrial release factor family. Post-translationally, methylated by PrmC. Methylation increases the termination efficiency of RF1.

It localises to the cytoplasm. In terms of biological role, peptide chain release factor 1 directs the termination of translation in response to the peptide chain termination codons UAG and UAA. This is Peptide chain release factor 1 from Clostridium novyi (strain NT).